Reading from the N-terminus, the 1368-residue chain is DNA-directed RNA polymerase subunit beta (1368 aa).

Belongs to the RNA polymerase beta chain family. The RNAP catalytic core consists of 2 alpha, 1 beta, 1 beta' and 1 omega subunit. When a sigma factor is associated with the core the holoenzyme is formed, which can initiate transcription.

The enzyme catalyses RNA(n) + a ribonucleoside 5'-triphosphate = RNA(n+1) + diphosphate. Its function is as follows. DNA-dependent RNA polymerase catalyzes the transcription of DNA into RNA using the four ribonucleoside triphosphates as substrates. The protein is DNA-directed RNA polymerase subunit beta of Legionella pneumophila subsp. pneumophila (strain Philadelphia 1 / ATCC 33152 / DSM 7513).